A 650-amino-acid chain; its full sequence is Acetyl-coenzyme A synthetase (650 aa).

CoA contacts are provided by residues 191–194 (RGGR), Thr-311, and Asn-335. Residues 387–389 (GEP), 411–416 (DTWWQT), Asp-500, and Arg-515 each bind ATP. Residue Ser-523 coordinates CoA. ATP is bound at residue Arg-526. The Mg(2+) site is built by Val-537, His-539, and Val-542. CoA is bound at residue Arg-584. Lys-609 bears the N6-acetyllysine mark.

The protein belongs to the ATP-dependent AMP-binding enzyme family. Mg(2+) serves as cofactor. In terms of processing, acetylated. Deacetylation by the SIR2-homolog deacetylase activates the enzyme.

It catalyses the reaction acetate + ATP + CoA = acetyl-CoA + AMP + diphosphate. Functionally, catalyzes the conversion of acetate into acetyl-CoA (AcCoA), an essential intermediate at the junction of anabolic and catabolic pathways. AcsA undergoes a two-step reaction. In the first half reaction, AcsA combines acetate with ATP to form acetyl-adenylate (AcAMP) intermediate. In the second half reaction, it can then transfer the acetyl group from AcAMP to the sulfhydryl group of CoA, forming the product AcCoA. This chain is Acetyl-coenzyme A synthetase, found in Shewanella frigidimarina (strain NCIMB 400).